Here is a 375-residue protein sequence, read N- to C-terminus: GDP-mannose-dependent alpha-mannosyltransferase (375 aa).

It belongs to the glycosyltransferase group 1 family. Glycosyltransferase 4 subfamily.

It functions in the pathway phospholipid metabolism; phosphatidylinositol metabolism. Catalyzes the addition of a mannose residue from GDP-D-mannose to GlcAGroAc2 to generate 1,2-di-O-C16/C18:1-(alpha-D-mannopyranosyl)-(1-4)-(alpha-D-glucopyranosyluronic acid)-(1-3)-glycerol(ManGlcAGroAc2). The protein is GDP-mannose-dependent alpha-mannosyltransferase (mgtA) of Mycolicibacterium smegmatis (strain ATCC 700084 / mc(2)155) (Mycobacterium smegmatis).